Consider the following 1400-residue polypeptide: Tensin-2 (1400 aa).

The Phorbol-ester/DAG-type zinc finger occupies 31–79 (PHSFREKVFRKKTPVCAVCKVTIDGTGVSCRVCKVATHRKCEAKVTSSC). A Phosphothreonine modification is found at T91. S118 and S120 each carry phosphoserine. In terms of domain architecture, Phosphatase tensin-type spans 122–294 (DPLMERRWDL…SYFSGLLSGS (173 aa)). Catalysis depends on C231, which acts as the Phosphocysteine intermediate. A C2 tensin-type domain is found at 299 to 425 (SSPLFLHYVF…ASVEFVFSSS (127 aa)). Residues 425-444 (SPEKVKGNTPRNDPSVSVDY) form a disordered region. The span at 433-444 (TPRNDPSVSVDY) shows a compositional bias: polar residues. S455 bears the Phosphoserine mark. Y456 bears the Phosphotyrosine mark. S466 bears the Phosphoserine mark. At T474 the chain carries Phosphothreonine. A Phosphoserine modification is found at S481. Position 483 is a phosphotyrosine (Y483). Residues 488–536 (RVPRQTPPAPSPELPPPPMLSVSSDSGHSSTLTTEHTAESPGRPPPTAA) are disordered. Residues 492-506 (QTPPAPSPELPPPPM) show a composition bias toward pro residues. At R555 the chain carries Omega-N-methylarginine. Residues 809–1114 (CGSPSEGRGY…DVTQPPEHPL (306 aa)) form a disordered region. Residues S820, S825, S830, S832, and S835 each carry the phosphoserine modification. 2 stretches are compositionally biased toward polar residues: residues 898-917 (CSAS…SSPV) and 929-940 (TRSPSLAPTQRL). Position 909 is a phosphothreonine (T909). 3 positions are modified to phosphoserine: S931, S941, and S972. The residue at position 977 (T977) is a Phosphothreonine. A phosphoserine mark is found at S991 and S1003. The segment covering 1046–1056 (PEPPQSSPTPA) has biased composition (pro residues). Over residues 1082–1098 (SGQQPSPPARSTNQHVT) the composition is skewed to polar residues. S1087 is subject to Phosphoserine. An SH2 domain is found at 1131-1238 (WYKPHLSRDQ…SLPCCLRIPS (108 aa)). T1173 is subject to Phosphothreonine. The residue at position 1238 (S1238) is a Phosphoserine. The PTB domain maps to 1266–1399 (ACSVLYLTSV…FITKVLLGQR (134 aa)).

The protein belongs to the PTEN phosphatase protein family. As to quaternary structure, interacts with AXL. Interacts with SYK; leading to its phosphorylation. Interacts with SQSTM1 (via PB1 domain); the interaction leads to sequestration of TNS2 in cytoplasmic aggregates with SQSTM1 and promotes TNS2 ubiquitination and proteasomal degradation. Ubiquitinated following sequestration in cytoplasmic aggregates with SQSTM1, leading to proteasomal degradation. In the adult kidney, expressed mainly in glomeruli (at protein level). In the newborn kidney, localizes on the basal surface of podocytes along the glomerular basement membrane and not in endothelial cells. Low expression levels in anabolic skeletal muscles.

The protein localises to the cell junction. It localises to the focal adhesion. It is found in the cell membrane. Its subcellular location is the cytoplasm. The catalysed reaction is O-phospho-L-tyrosyl-[protein] + H2O = L-tyrosyl-[protein] + phosphate. Functionally, tyrosine-protein phosphatase which regulates cell motility, proliferation and muscle-response to insulin. Phosphatase activity is mediated by binding to phosphatidylinositol-3,4,5-triphosphate (PtdIns(3,4,5)P3) via the SH2 domain. In muscles and under catabolic conditions, dephosphorylates IRS1 leading to its degradation and muscle atrophy. Negatively regulates PI3K-AKT pathway activation. Dephosphorylates nephrin NPHS1 in podocytes which affects mTORC1 complex activity. Under normal glucose conditions, NPHS1 outcompetes IRS1 for binding to phosphatidylinositol 3-kinase (PI3K) which balances mTORC1 activity but high glucose conditions lead to up-regulation of TNS2, increased NPHS1 dephosphorylation and activation of mTORC1, contributing to podocyte hypertrophy and proteinuria. Required for correct podocyte morphology, podocyte-glomerular basement membrane interaction and integrity of the glomerular filtration barrier. Enhances RHOA activation in the presence of DLC1. Plays a role in promoting DLC1-dependent remodeling of the extracellular matrix. The chain is Tensin-2 (Tns2) from Mus musculus (Mouse).